The chain runs to 218 residues: Small ribosomal subunit protein uS3 (218 aa).

One can recognise a KH type-2 domain in the interval 38–106; it reads IREYISKRLS…RVHINILEIK (69 aa).

It belongs to the universal ribosomal protein uS3 family. As to quaternary structure, part of the 30S ribosomal subunit. Forms a tight complex with proteins S10 and S14.

In terms of biological role, binds the lower part of the 30S subunit head. Binds mRNA in the 70S ribosome, positioning it for translation. The polypeptide is Small ribosomal subunit protein uS3 (Bacillus subtilis (strain 168)).